The sequence spans 62 residues: Alpha-lytic protease L1 (62 aa).

S48 (charge relay system) is an active-site residue.

This sequence belongs to the peptidase S1 family. In terms of assembly, monomer.

It is found in the secreted. The catalysed reaction is Preferential cleavage: Ala-|-Xaa, Val-|-Xaa in bacterial cell walls, elastin and other proteins.. With respect to regulation, inhibited by phenylmethanesulfonyl fluoride (PMSF) and p-chloromercuribenzoate (PCMB). Functionally, has bacteriolytic activity. This Lysobacter sp. (strain XL1) protein is Alpha-lytic protease L1.